Consider the following 584-residue polypeptide: 65 kDa membrane protein (584 aa).

An N-terminal signal peptide occupies residues 1–30 (MKFKSLITTTLALGVLASTGANFNNNEASA). MAP repeat units follow at residues 45–154 (GYSK…EDKK), 156–265 (DKAN…ENKA), 266–374 (KRNY…KADR), 375–474 (YVPY…TGTK), and 475–584 (AKAD…KKNK).

The protein resides in the cell membrane. Binds various plasma and ECM-proteins. This is 65 kDa membrane protein from Staphylococcus aureus (strain Newman).